A 149-amino-acid polypeptide reads, in one-letter code: CCAAT/enhancer-binding protein gamma (149 aa).

Residues 1–12 (MSKVSQQNSTPG) are compositionally biased toward polar residues. Positions 1 to 92 (MSKVSQQNST…SKQKAQDTLQ (92 aa)) are disordered. A Glycyl lysine isopeptide (Lys-Gly) (interchain with G-Cter in SUMO2) cross-link involves residue lysine 3. Positions 28-37 (LQQVPQLVPA) are enriched in low complexity. Residues 56-72 (SPMDRNSDEYRQRRERN) are compositionally biased toward basic and acidic residues. Positions 62–125 (SDEYRQRRER…SVLKDLFLEH (64 aa)) constitute a bZIP domain. Residues 66 to 93 (RQRRERNNMAVKKSRLKSKQKAQDTLQR) are basic motif. The interval 97-118 (LKEENERLEAKIKLLTKELSVL) is leucine-zipper. A disordered region spans residues 128 to 149 (NLADNVQPSSTENTTNPDKAGQ). Residues 131 to 149 (DNVQPSSTENTTNPDKAGQ) are compositionally biased toward polar residues.

The protein belongs to the bZIP family. C/EBP subfamily. Binds DNA as a dimer and can form stable heterodimers with CEBPA and CEBPB. Interacts with ZNF638; this interaction increases transcriptional activation.

It localises to the nucleus. Its function is as follows. Transcription factor that binds to the promoter and the enhancer regions of target genes. Binds to the enhancer element PRE-I (positive regulatory element-I) of the IL-4 gene. Binds to the promoter and the enhancer of the immunoglobulin heavy chain. Binds to GPE1, a cis-acting element in the G-CSF gene promoter. The chain is CCAAT/enhancer-binding protein gamma (CEBPG) from Bos taurus (Bovine).